Here is a 344-residue protein sequence, read N- to C-terminus: Heat-inducible transcription repressor hrcA (344 aa).

It belongs to the HrcA family.

Negative regulator of class I heat shock genes (grpE-dnaK-dnaJ and groELS operons). Prevents heat-shock induction of these operons. The sequence is that of Heat-inducible transcription repressor hrcA from Streptococcus pyogenes serotype M3 (strain ATCC BAA-595 / MGAS315).